The sequence spans 275 residues: 3-methyl-2-oxobutanoate hydroxymethyltransferase (275 aa).

Residues D51 and D90 each coordinate Mg(2+). Residues 51-52 (DS), D90, and K120 contribute to the 3-methyl-2-oxobutanoate site. E122 contacts Mg(2+). The active-site Proton acceptor is E189.

This sequence belongs to the PanB family. In terms of assembly, homodecamer; pentamer of dimers. Mg(2+) is required as a cofactor.

It localises to the cytoplasm. The enzyme catalyses 3-methyl-2-oxobutanoate + (6R)-5,10-methylene-5,6,7,8-tetrahydrofolate + H2O = 2-dehydropantoate + (6S)-5,6,7,8-tetrahydrofolate. Its pathway is cofactor biosynthesis; (R)-pantothenate biosynthesis; (R)-pantoate from 3-methyl-2-oxobutanoate: step 1/2. Catalyzes the reversible reaction in which hydroxymethyl group from 5,10-methylenetetrahydrofolate is transferred onto alpha-ketoisovalerate to form ketopantoate. This chain is 3-methyl-2-oxobutanoate hydroxymethyltransferase, found in Phenylobacterium zucineum (strain HLK1).